The primary structure comprises 295 residues: Pyridoxal 5'-phosphate synthase subunit PdxS (295 aa).

Position 25 (D25) interacts with D-ribose 5-phosphate. The active-site Schiff-base intermediate with D-ribose 5-phosphate is the K82. Residue G154 coordinates D-ribose 5-phosphate. Residue R166 participates in D-glyceraldehyde 3-phosphate binding. D-ribose 5-phosphate contacts are provided by residues G215 and 236 to 237 (GS).

This sequence belongs to the PdxS/SNZ family. In terms of assembly, in the presence of PdxT, forms a dodecamer of heterodimers.

The catalysed reaction is aldehydo-D-ribose 5-phosphate + D-glyceraldehyde 3-phosphate + L-glutamine = pyridoxal 5'-phosphate + L-glutamate + phosphate + 3 H2O + H(+). The protein operates within cofactor biosynthesis; pyridoxal 5'-phosphate biosynthesis. Its function is as follows. Catalyzes the formation of pyridoxal 5'-phosphate from ribose 5-phosphate (RBP), glyceraldehyde 3-phosphate (G3P) and ammonia. The ammonia is provided by the PdxT subunit. Can also use ribulose 5-phosphate and dihydroxyacetone phosphate as substrates, resulting from enzyme-catalyzed isomerization of RBP and G3P, respectively. The polypeptide is Pyridoxal 5'-phosphate synthase subunit PdxS (Bacillus cereus (strain B4264)).